The sequence spans 340 residues: Ketol-acid reductoisomerase (NADP(+)) (340 aa).

The region spanning 1–183 (MAITVYYDKD…GGGRTGIIET (183 aa)) is the KARI N-terminal Rossmann domain. Residues 26 to 29 (FGSQ), R49, S52, S54, and 84 to 87 (DEIQ) contribute to the NADP(+) site. Residue H109 is part of the active site. G135 is an NADP(+) binding site. Residues 184-329 (TFKAETETDL…RNLRAMMPWI (146 aa)) form the KARI C-terminal knotted domain. Residues D192, E196, E228, and E232 each coordinate Mg(2+). S253 is a binding site for substrate.

This sequence belongs to the ketol-acid reductoisomerase family. Requires Mg(2+) as cofactor.

It catalyses the reaction (2R)-2,3-dihydroxy-3-methylbutanoate + NADP(+) = (2S)-2-acetolactate + NADPH + H(+). The catalysed reaction is (2R,3R)-2,3-dihydroxy-3-methylpentanoate + NADP(+) = (S)-2-ethyl-2-hydroxy-3-oxobutanoate + NADPH + H(+). The protein operates within amino-acid biosynthesis; L-isoleucine biosynthesis; L-isoleucine from 2-oxobutanoate: step 2/4. It participates in amino-acid biosynthesis; L-valine biosynthesis; L-valine from pyruvate: step 2/4. Involved in the biosynthesis of branched-chain amino acids (BCAA). Catalyzes an alkyl-migration followed by a ketol-acid reduction of (S)-2-acetolactate (S2AL) to yield (R)-2,3-dihydroxy-isovalerate. In the isomerase reaction, S2AL is rearranged via a Mg-dependent methyl migration to produce 3-hydroxy-3-methyl-2-ketobutyrate (HMKB). In the reductase reaction, this 2-ketoacid undergoes a metal-dependent reduction by NADPH to yield (R)-2,3-dihydroxy-isovalerate. The sequence is that of Ketol-acid reductoisomerase (NADP(+)) from Campylobacter jejuni subsp. jejuni serotype O:23/36 (strain 81-176).